The sequence spans 257 residues: MSMLKVSNIQKNFNGNHVLKGIDFEINKGEVVAILGPSGSGKTTFLRCLNLLERPEQGILEFTDGSLKIDFSQKISKADELKLRRRSSMVFQQYNLFPHRSALENVMEGMVVVQKQDKAQAREKALSLLEKVGLKNKADLFPSQLSGGQQQRVGIARALAVKPDIILLDEPTSALDPELVGEVLQTLKMLAQEGWTMIIVTHEMQFAKDVADRVILMADGHIVEQNTADKFFTCPQHERTKQFLLQAKIPLELDYYI.

An ABC transporter domain is found at 4 to 244; sequence LKVSNIQKNF…PQHERTKQFL (241 aa). Position 36 to 43 (36 to 43) interacts with ATP; it reads GPSGSGKT.

It belongs to the ABC transporter superfamily.

The protein localises to the cell inner membrane. Probably part of a binding-protein-dependent transport system for an amino acid. Probably responsible for energy coupling to the transport system. The polypeptide is Probable amino-acid ABC transporter ATP-binding protein HI_1078 (Haemophilus influenzae (strain ATCC 51907 / DSM 11121 / KW20 / Rd)).